The sequence spans 201 residues: Small ribosomal subunit protein uS4c (201 aa).

The tract at residues 14–43 (RLGALPGLTSKRPRAGSDLRNQSRPGKKSQ) is disordered. The S4 RNA-binding domain occupies 89-169 (MRLDNILFRL…LPKHLTFHTL (81 aa)).

The protein belongs to the universal ribosomal protein uS4 family. As to quaternary structure, part of the 30S ribosomal subunit. Contacts protein S5. The interaction surface between S4 and S5 is involved in control of translational fidelity.

It is found in the plastid. Its subcellular location is the chloroplast. In terms of biological role, one of the primary rRNA binding proteins, it binds directly to 16S rRNA where it nucleates assembly of the body of the 30S subunit. Its function is as follows. With S5 and S12 plays an important role in translational accuracy. The polypeptide is Small ribosomal subunit protein uS4c (rps4) (Gossypium hirsutum (Upland cotton)).